Consider the following 648-residue polypeptide: Macrolide export ATP-binding/permease protein MacB (648 aa).

Over 1 to 272 (MTPLLELKDI…RALAANKMRT (272 aa)) the chain is Cytoplasmic. The ABC transporter domain occupies 5–243 (LELKDIRRSY…TGGTEPVVNT (239 aa)). 41–48 (GASGSGKS) contributes to the ATP binding site. Residues 273-293 (LLTMLGIIIGIASVVSIVVVG) traverse the membrane as a helical segment. Residues 294-522 (DAAKQMVLAD…TVEKTTRTLQ (229 aa)) are Periplasmic-facing. Residues 523–543 (LFLTLVAVISLVVGGIGVMNI) form a helical membrane-spanning segment. Residues 544–575 (MLVSVTERTREIGIRMAVGARASDVLQQFLIE) are Cytoplasmic-facing. Residues 576 to 596 (AVLVCLVGGALGITLSLLIAF) traverse the membrane as a helical segment. The Periplasmic portion of the chain corresponds to 597–610 (TLQLFLPGWEIGFS). Residues 611–631 (PLALLLAFLCSTVTGILFGWL) traverse the membrane as a helical segment. At 632–648 (PARNAARLDPVDALARE) the chain is on the cytoplasmic side.

It belongs to the ABC transporter superfamily. Macrolide exporter (TC 3.A.1.122) family. As to quaternary structure, homodimer. Part of the tripartite efflux system MacAB-TolC, which is composed of an inner membrane transporter, MacB, a periplasmic membrane fusion protein, MacA, and an outer membrane component, TolC. The complex forms a large protein conduit and can translocate molecules across both the inner and outer membranes. Interacts with MacA.

The protein localises to the cell inner membrane. With respect to regulation, ATPase activity is stimulated by interaction with MacA and inhibited by vanadate. Functionally, part of the tripartite efflux system MacAB-TolC. MacB is a non-canonical ABC transporter that contains transmembrane domains (TMD), which form a pore in the inner membrane, and an ATP-binding domain (NBD), which is responsible for energy generation. When overexpressed, the system confers resistance against macrolides composed of 14- and 15-membered lactones but no or weak resistance against 16-membered ones. In addition, the system could also transport R-LPS or a similar glycolipid. The chain is Macrolide export ATP-binding/permease protein MacB from Escherichia coli (strain K12).